The following is a 361-amino-acid chain: Caffeic acid 3-O-methyltransferase 2 (361 aa).

128-134 (MNQDKVL) is a substrate binding site. The segment at 160–178 (AFEYHGTDPRFNKVFNQGM) is substrate binding. S-adenosyl-L-methionine is bound by residues Gly206, Asp229, Asp249, Met250, and Lys263. His267 functions as the Proton acceptor in the catalytic mechanism.

Belongs to the class I-like SAM-binding methyltransferase superfamily. Cation-independent O-methyltransferase family. COMT subfamily. Homodimer.

The enzyme catalyses (E)-caffeate + S-adenosyl-L-methionine = (E)-ferulate + S-adenosyl-L-homocysteine + H(+). It participates in aromatic compound metabolism; phenylpropanoid biosynthesis. In terms of biological role, catalyzes the conversion of caffeic acid to ferulic acid and of 5-hydroxyferulic acid to sinapic acid. The resulting products may subsequently be converted to the corresponding alcohols that are incorporated into lignins. In Ocimum basilicum (Sweet basil), this protein is Caffeic acid 3-O-methyltransferase 2 (COMT2).